A 159-amino-acid polypeptide reads, in one-letter code: Oleosin Cor a 12 (159 aa).

Positions 1 to 10 (MADRPQQLQV) are enriched in polar residues. Positions 1–24 (MADRPQQLQVHPQRGHGHYEGGIK) are disordered. Helical transmembrane passes span 45 to 65 (VGGT…IGLL), 70 to 90 (LFII…LAVA), and 92 to 112 (FLSS…VLNY).

It belongs to the oleosin family. In terms of tissue distribution, expressed in seeds.

The protein resides in the lipid droplet. Its subcellular location is the membrane. In terms of biological role, may have a structural role to stabilize the lipid body during desiccation of the seed by preventing coalescence of the oil. Probably interacts with both lipid and phospholipid moieties of lipid bodies. May also provide recognition signals for specific lipase anchorage in lipolysis during seedling growth. The protein is Oleosin Cor a 12 of Corylus avellana (European hazel).